Reading from the N-terminus, the 370-residue chain is D-alanine--D-alanine ligase (370 aa).

Residues 144–352 enclose the ATP-grasp domain; the sequence is KKIFADAGIP…YSALIERLVD (209 aa). An ATP-binding site is contributed by 177–232; the sequence is EEVLTYPVFVKPANLGSSVGISKATNKKELEDAMTEAFLYDRRVVVEQGVVAREIE. 3 residues coordinate Mg(2+): Asp306, Glu319, and Asn321.

Belongs to the D-alanine--D-alanine ligase family. It depends on Mg(2+) as a cofactor. Requires Mn(2+) as cofactor.

It localises to the cytoplasm. The enzyme catalyses 2 D-alanine + ATP = D-alanyl-D-alanine + ADP + phosphate + H(+). The protein operates within cell wall biogenesis; peptidoglycan biosynthesis. In terms of biological role, cell wall formation. This Listeria welshimeri serovar 6b (strain ATCC 35897 / DSM 20650 / CCUG 15529 / CIP 8149 / NCTC 11857 / SLCC 5334 / V8) protein is D-alanine--D-alanine ligase.